The sequence spans 1442 residues: DNA polymerase III PolC-type (1442 aa).

The region spanning 409-568 is the Exonuclease domain; it reads YVIFDIETTG…YDAIVLADVF (160 aa).

The protein belongs to the DNA polymerase type-C family. PolC subfamily.

The protein resides in the cytoplasm. The enzyme catalyses DNA(n) + a 2'-deoxyribonucleoside 5'-triphosphate = DNA(n+1) + diphosphate. In terms of biological role, required for replicative DNA synthesis. This DNA polymerase also exhibits 3' to 5' exonuclease activity. The polypeptide is DNA polymerase III PolC-type (Ureaplasma parvum serovar 3 (strain ATCC 700970)).